Consider the following 457-residue polypeptide: Cysteine--tRNA ligase (457 aa).

Position 30 (Cys30) interacts with Zn(2+). Residues 32 to 42 (PTVYDRAHLGN) carry the 'HIGH' region motif. Positions 213, 238, and 242 each coordinate Zn(2+). The short motif at 271-275 (KMSKS) is the 'KMSKS' region element. An ATP-binding site is contributed by Lys274.

It belongs to the class-I aminoacyl-tRNA synthetase family. Monomer. The cofactor is Zn(2+).

The protein resides in the cytoplasm. The catalysed reaction is tRNA(Cys) + L-cysteine + ATP = L-cysteinyl-tRNA(Cys) + AMP + diphosphate. This Ruegeria sp. (strain TM1040) (Silicibacter sp.) protein is Cysteine--tRNA ligase.